The primary structure comprises 89 residues: DNA-directed RNA polymerase subunit omega (89 aa).

This sequence belongs to the RNA polymerase subunit omega family. In terms of assembly, the RNAP catalytic core consists of 2 alpha, 1 beta, 1 beta' and 1 omega subunit. When a sigma factor is associated with the core the holoenzyme is formed, which can initiate transcription.

It carries out the reaction RNA(n) + a ribonucleoside 5'-triphosphate = RNA(n+1) + diphosphate. Promotes RNA polymerase assembly. Latches the N- and C-terminal regions of the beta' subunit thereby facilitating its interaction with the beta and alpha subunits. The protein is DNA-directed RNA polymerase subunit omega (rpoZ) of Pasteurella multocida (strain Pm70).